The primary structure comprises 203 residues: Holliday junction branch migration complex subunit RuvA (203 aa).

Residues 1 to 63 form a domain I region; the sequence is MIGQLSGKVD…EEHIHLYGFL (63 aa). The tract at residues 64 to 142 is domain II; the sequence is TLEEKIFFNL…KISSGSAIIK (79 aa). The tract at residues 143–149 is flexible linker; sequence ESLNIKN. The domain III stretch occupies residues 150-203; sequence ITPVASNEVIKALVNLGFSRFEAQNAVQGIITQNPEISIDELIKTALKNRNSNF.

Belongs to the RuvA family. As to quaternary structure, homotetramer. Forms an RuvA(8)-RuvB(12)-Holliday junction (HJ) complex. HJ DNA is sandwiched between 2 RuvA tetramers; dsDNA enters through RuvA and exits via RuvB. An RuvB hexamer assembles on each DNA strand where it exits the tetramer. Each RuvB hexamer is contacted by two RuvA subunits (via domain III) on 2 adjacent RuvB subunits; this complex drives branch migration. In the full resolvosome a probable DNA-RuvA(4)-RuvB(12)-RuvC(2) complex forms which resolves the HJ.

It is found in the cytoplasm. Functionally, the RuvA-RuvB-RuvC complex processes Holliday junction (HJ) DNA during genetic recombination and DNA repair, while the RuvA-RuvB complex plays an important role in the rescue of blocked DNA replication forks via replication fork reversal (RFR). RuvA specifically binds to HJ cruciform DNA, conferring on it an open structure. The RuvB hexamer acts as an ATP-dependent pump, pulling dsDNA into and through the RuvAB complex. HJ branch migration allows RuvC to scan DNA until it finds its consensus sequence, where it cleaves and resolves the cruciform DNA. The protein is Holliday junction branch migration complex subunit RuvA of Rickettsia conorii (strain ATCC VR-613 / Malish 7).